The sequence spans 606 residues: Alpha-1,2-mannosyltransferase MNN23 (606 aa).

Topologically, residues 1-14 are cytoplasmic; it reads MSINFLSIPRNRFK. The helical transmembrane segment at 15 to 35 threads the bilayer; it reads AIGVLSVTCILIYVILHSSII. Over 36-606 the chain is Extracellular; sequence TTDFDVSDYG…QVAWLSKSQN (571 aa). The interval 59–86 is disordered; that stretch reads DNGENLKDPQPELDNDKGNGETDTTTSN. Residues 62-78 show a composition bias toward basic and acidic residues; the sequence is ENLKDPQPELDNDKGNG.

It belongs to the MNN1/MNT family.

Its subcellular location is the golgi apparatus membrane. The protein operates within protein modification; protein glycosylation. In terms of biological role, alpha-1,2-mannosyltransferase required for cell wall integrity. Responsible for addition of the first alpha-1,2-linked mannose to form the branches on the mannan backbone of oligosaccharides. Addition of alpha-1,2-mannose is required for stabilization of the alpha-1,6-mannose backbone and hence regulates mannan fibril length; and is important for both immune recognition and virulence. The sequence is that of Alpha-1,2-mannosyltransferase MNN23 (MNN23) from Candida albicans (strain SC5314 / ATCC MYA-2876) (Yeast).